Reading from the N-terminus, the 327-residue chain is Serpentine receptor class alpha-12 (327 aa).

At 1 to 18 the chain is on the extracellular side; the sequence is MGCASEIQAEIFTSFGQL. The chain crosses the membrane as a helical span at residues 19–39; it reads FYASFQTILFLATIIGSLLAI. The Cytoplasmic segment spans residues 40 to 53; that stretch reads FELCKKTTVPDSTR. Residues 54–74 form a helical membrane-spanning segment; that stretch reads VLLIGSLFFANAHEFAYFTAP. Residues 75-98 lie on the Extracellular side of the membrane; it reads LKVFQLNIFNTNTSCYPLISTRDC. Residues 99–119 form a helical membrane-spanning segment; the sequence is IPTTTVLAMGISGNMLIQSAL. Residues 120–138 lie on the Cytoplasmic side of the membrane; the sequence is SIDRLLATIFPFSYSRMRA. The chain crosses the membrane as a helical span at residues 139–159; sequence LPGFVLLIMVLIPAMFTYSWI. The Extracellular portion of the chain corresponds to 160–185; sequence RLDIVLDDYQMFCSQWSANISTRANT. A helical transmembrane segment spans residues 186-206; that stretch reads FLEICSYLTVAHIIINCLIIL. Residues 207-234 lie on the Cytoplasmic side of the membrane; it reads RNRAIEKRCRFDVTQRYLTSENLKTTQA. The chain crosses the membrane as a helical span at residues 235-255; the sequence is ICYLSIAQFLAMFMYSGGVLL. Over 256–270 the chain is Extracellular; it reads MRKNRENIPTLIYFN. The chain crosses the membrane as a helical span at residues 271-291; it reads VIVWVYAPPYACVSLAPLILF. The Cytoplasmic portion of the chain corresponds to 292–327; the sequence is SLWNLKKQRHIQIKSVQSAQKETQDDYIRKLQKSWK.

This sequence belongs to the nematode receptor-like protein sra family. As to expression, expressed in neurons RIF/RIG and PVT.

It localises to the membrane. This chain is Serpentine receptor class alpha-12 (sra-12), found in Caenorhabditis elegans.